Here is a 336-residue protein sequence, read N- to C-terminus: Ornithine carbamoyltransferase, catabolic (336 aa).

Residues 57–60 (STRT), Gln-84, Arg-108, and 135–138 (HPTQ) contribute to the carbamoyl phosphate site. L-ornithine-binding positions include Asn-169, Asp-233, and 237-238 (SM). Carbamoyl phosphate-binding positions include 275-276 (CL) and Arg-322.

This sequence belongs to the aspartate/ornithine carbamoyltransferase superfamily. OTCase family.

It is found in the cytoplasm. The catalysed reaction is carbamoyl phosphate + L-ornithine = L-citrulline + phosphate + H(+). It participates in amino-acid degradation; L-arginine degradation via ADI pathway; carbamoyl phosphate from L-arginine: step 2/2. In terms of biological role, reversibly catalyzes the transfer of the carbamoyl group from carbamoyl phosphate (CP) to the N(epsilon) atom of ornithine (ORN) to produce L-citrulline. This chain is Ornithine carbamoyltransferase, catabolic, found in Photobacterium profundum (strain SS9).